We begin with the raw amino-acid sequence, 190 residues long: Protein GrpE (190 aa).

Over residues Met-1–Ser-18 the composition is skewed to polar residues. The segment at Met-1–Asn-21 is disordered.

It belongs to the GrpE family. In terms of assembly, homodimer.

The protein resides in the cytoplasm. Functionally, participates actively in the response to hyperosmotic and heat shock by preventing the aggregation of stress-denatured proteins, in association with DnaK and GrpE. It is the nucleotide exchange factor for DnaK and may function as a thermosensor. Unfolded proteins bind initially to DnaJ; upon interaction with the DnaJ-bound protein, DnaK hydrolyzes its bound ATP, resulting in the formation of a stable complex. GrpE releases ADP from DnaK; ATP binding to DnaK triggers the release of the substrate protein, thus completing the reaction cycle. Several rounds of ATP-dependent interactions between DnaJ, DnaK and GrpE are required for fully efficient folding. This chain is Protein GrpE, found in Chlamydia trachomatis serovar A (strain ATCC VR-571B / DSM 19440 / HAR-13).